Consider the following 108-residue polypeptide: Nucleoid-associated protein GWCH70_0020 (108 aa).

Residues 1–34 are disordered; the sequence is MMRGGMGNMQKMMKQMQKMQKEMQKAQEQLAEKT. Residues 9-18 are compositionally biased toward low complexity; it reads MQKMMKQMQK. Over residues 19 to 34 the composition is skewed to basic and acidic residues; the sequence is MQKEMQKAQEQLAEKT.

The protein belongs to the YbaB/EbfC family. As to quaternary structure, homodimer.

It is found in the cytoplasm. Its subcellular location is the nucleoid. Binds to DNA and alters its conformation. May be involved in regulation of gene expression, nucleoid organization and DNA protection. In Geobacillus sp. (strain WCH70), this protein is Nucleoid-associated protein GWCH70_0020.